A 158-amino-acid chain; its full sequence is Large ribosomal subunit protein uL16 (158 aa).

Belongs to the universal ribosomal protein uL16 family. As to quaternary structure, part of the 50S ribosomal subunit.

Its function is as follows. Binds 23S rRNA and is also seen to make contacts with the A and possibly P site tRNAs. In Synechococcus sp. (strain CC9902), this protein is Large ribosomal subunit protein uL16.